Here is a 222-residue protein sequence, read N- to C-terminus: Probable elongation factor 1-beta (222 aa).

Residues 90–111 (KPAADDDDDVDLFGSDDEEDEE) are disordered. Over residues 94 to 111 (DDDDDVDLFGSDDEEDEE) the composition is skewed to acidic residues. Ser104 is subject to Phosphoserine.

The protein belongs to the EF-1-beta/EF-1-delta family. EF-1 is composed of 4 subunits: alpha, beta, beta' and gamma. Phosphorylation affects the GDP/GTP exchange rate.

Functionally, EF-1-beta and EF-1-delta stimulate the exchange of GDP bound to EF-1-alpha to GTP. This Drosophila melanogaster (Fruit fly) protein is Probable elongation factor 1-beta.